Reading from the N-terminus, the 78-residue chain is Conotoxin TsMSGL-11 (78 aa).

Positions methionine 1–alanine 24 are cleaved as a signal peptide. Positions glycine 25–threonine 44 are excised as a propeptide. Disulfide bonds link cysteine 51–cysteine 63, cysteine 55–cysteine 72, and cysteine 62–cysteine 76. Phenylalanine 77 is subject to Phenylalanine amide.

Belongs to the conotoxin O3 superfamily. As to expression, expressed by the venom duct.

It is found in the secreted. The chain is Conotoxin TsMSGL-11 from Conus tessulatus (Tessellate cone).